The primary structure comprises 404 residues: MKYSEIMVRHGELSTKGKNRMRFINRLKANIQDVLSAYPEVTVRSTRDRTHVLLNGADDRSVIEALKPVFGIQGLSPVYKVEKSVPVLIAAVQEIMSSLYREGLTFKISSKRSDHQFELDSRDLNHTLGAAVFEALPHIKAQMKNPDVTLKVEIRDEAAYLSHEDIKGAGGLPVGASGKGMLMLSGGIDSPVAGYLSLKRGVEIEAVHFASPPYTSPGALRKAKDLTQRLTRFGGNIQFIEVPFTEIQEEIKHKAPEAYLMTLTRRFMLRITDAIREKRKALVIINGESLGQVASQTLESMQAINAVTSTPIIRPVVAMDKLEIIDIAQQIDTFDISIQPFEDCCTIFAPDRPKTNPKLANVERYESRFDVDGLVERAVAGIRVTEITPEIETDSLSTLIEELL.

The THUMP domain maps to 60–165 (RSVIEALKPV…DEAAYLSHED (106 aa)). Residues 183-184 (ML), 208-209 (HF), Arg-265, Gly-287, and Gln-296 contribute to the ATP site.

It belongs to the ThiI family.

The protein resides in the cytoplasm. The catalysed reaction is [ThiI sulfur-carrier protein]-S-sulfanyl-L-cysteine + a uridine in tRNA + 2 reduced [2Fe-2S]-[ferredoxin] + ATP + H(+) = [ThiI sulfur-carrier protein]-L-cysteine + a 4-thiouridine in tRNA + 2 oxidized [2Fe-2S]-[ferredoxin] + AMP + diphosphate. The enzyme catalyses [ThiS sulfur-carrier protein]-C-terminal Gly-Gly-AMP + S-sulfanyl-L-cysteinyl-[cysteine desulfurase] + AH2 = [ThiS sulfur-carrier protein]-C-terminal-Gly-aminoethanethioate + L-cysteinyl-[cysteine desulfurase] + A + AMP + 2 H(+). It functions in the pathway cofactor biosynthesis; thiamine diphosphate biosynthesis. Functionally, catalyzes the ATP-dependent transfer of a sulfur to tRNA to produce 4-thiouridine in position 8 of tRNAs, which functions as a near-UV photosensor. Also catalyzes the transfer of sulfur to the sulfur carrier protein ThiS, forming ThiS-thiocarboxylate. This is a step in the synthesis of thiazole, in the thiamine biosynthesis pathway. The sulfur is donated as persulfide by IscS. This chain is Probable tRNA sulfurtransferase, found in Streptococcus equi subsp. zooepidemicus (strain H70).